We begin with the raw amino-acid sequence, 138 residues long: Protein FAM136A (138 aa).

Ala-2 carries the N-acetylalanine modification. Thr-124 and Thr-126 each carry phosphothreonine.

It belongs to the FAM136 family.

The protein is Protein FAM136A (Fam136a) of Rattus norvegicus (Rat).